Consider the following 546-residue polypeptide: Phosphatidylinositol 4-phosphate 5-kinase type-1 alpha (546 aa).

A PIPK domain is found at 66 to 434 (TSSALKGAIQ…RFQRFMCNTV (369 aa)). Lys-88 participates in a covalent cross-link: Glycyl lysine isopeptide (Lys-Gly) (interchain with G-Cter in ubiquitin). Disordered stretches follow at residues 442 to 475 (PSPT…SGEH) and 491 to 518 (LGRP…PSFS). 2 stretches are compositionally biased toward low complexity: residues 450–462 (SGPS…GPSG) and 509–518 (GSPVPGPSFS).

In terms of assembly, interacts with RAC1. Interacts with TUT1. Forms a complex with CDH1/E-cadherin, CTNNB1/beta-catenin and CTNND1 at the plasma membrane upon calcium stimulation. Found in a ternary complex with IRS1 and DGKZ in the absence of insulin stimulation. Interacts with DGKZ. Interacts with PIP4K2C; the interaction inhibits PIP5K1A kinase activity. In terms of tissue distribution, highest expression in brain. Also detected in skeletal muscle, testis, brain and lung.

It localises to the cell membrane. It is found in the cytoplasm. Its subcellular location is the nucleus. The protein localises to the nucleus speckle. The protein resides in the cell projection. It localises to the ruffle. It is found in the lamellipodium. The catalysed reaction is a 1,2-diacyl-sn-glycero-3-phospho-(1D-myo-inositol 4-phosphate) + ATP = a 1,2-diacyl-sn-glycero-3-phospho-(1D-myo-inositol-4,5-bisphosphate) + ADP + H(+). The enzyme catalyses 1-octadecanoyl-2-(5Z,8Z,11Z,14Z)-eicosatetraenoyl-sn-glycero-3-phospho-1D-myo-inositol 4-phosphate + ATP = 1-octadecanoyl-2-(5Z,8Z,11Z,14Z)-eicosatetraenoyl-sn-glycero-3-phospho-1D-myo-inositol 4,5-bisphosphate + ADP + H(+). It catalyses the reaction 1,2-dihexadecanoyl-sn-glycero-3-phospho-(1D-myo-inositol-4-phosphate) + ATP = 1,2-dihexadecanoyl-sn-glycero-3-phospho-(1D-myo-inositol-4,5-bisphosphate) + ADP + H(+). It carries out the reaction 1-octadecanoyl-2-(9Z)-octadecenoyl-sn-glycero-3-phospho-1D-myo-inositol 4-phosphate + ATP = 1-octadecanoyl-2-(9Z)-octadecenoyl-sn-glycero-3-phospho-1D-myo-inositol 4,5-bisphosphate + ADP + H(+). The catalysed reaction is 1-octadecanoyl-2-(9Z)-octadecenoyl-sn-glycero-3-phospho-1D-myo-inositol + ATP = 1-octadecanoyl-2-(9Z)-octadecenoyl-sn-glycero-3-phospho-1D-myo-inositol 5-phosphate + ADP + H(+). The enzyme catalyses 1-octadecanoyl-2-(9Z,12Z)-octadecadienoyl-sn-glycero-3-phospho-1D-myo-inositol + ATP = 1-octadecanoyl-2-(9Z,12Z)-octadecadienoyl-sn-glycero-3-phospho-1D-myo-inositol 5-phosphate + ADP + H(+). It catalyses the reaction 1-octadecanoyl-2-(5Z,8Z,11Z,14Z-eicosatetraenoyl)-sn-glycero-3-phospho-(1D-myo-inositol) + ATP = 1-octadecanoyl-2-(5Z,8Z,11Z,14Z)-eicosatetraenoyl-sn-glycero-3-phospho-1D-myo-inositol 5-phosphate + ADP + H(+). It carries out the reaction 1,2-di-(9Z,12Z)-octadecadienoyl-sn-glycero-3-phospho-1D-myo-inositol + ATP = 1,2-di(9Z,12Z)-octadecadienoyl-sn-glycero-3-phospho-1D-myo-inositol 5-phosphate + ADP + H(+). Its activity is regulated as follows. Activated by phosphatidic acid. Functionally, catalyzes the phosphorylation of phosphatidylinositol 4-phosphate (PtdIns(4)P/PI4P) to form phosphatidylinositol 4,5-bisphosphate (PtdIns(4,5)P2/PIP2), a lipid second messenger that regulates several cellular processes such as signal transduction, vesicle trafficking, actin cytoskeleton dynamics, cell adhesion, and cell motility. PtdIns(4,5)P2 can directly act as a second messenger or can be utilized as a precursor to generate other second messengers: inositol 1,4,5-trisphosphate (IP3), diacylglycerol (DAG) or phosphatidylinositol-3,4,5-trisphosphate (PtdIns(3,4,5)P3/PIP3). PIP5K1A-mediated phosphorylation of PtdIns(4)P is the predominant pathway for PtdIns(4,5)P2 synthesis. Can also use phosphatidylinositol (PtdIns) as substrate in vitro. Together with PIP5K1C, is required for phagocytosis, both enzymes regulating different types of actin remodeling at sequential steps. Promotes particle ingestion by activating the WAS GTPase-binding protein that induces Arp2/3 dependent actin polymerization at the nascent phagocytic cup. Together with PIP5K1B, is required, after stimulation by G-protein coupled receptors, for the synthesis of IP3 that will induce stable platelet adhesion. Recruited to the plasma membrane by the E-cadherin/beta-catenin complex where it provides the substrate PtdIns(4,5)P2 for the production of PtdIns(3,4,5)P3, IP3 and DAG, that will mobilize internal calcium and drive keratinocyte differentiation. Positively regulates insulin-induced translocation of SLC2A4 to the cell membrane in adipocytes. Together with PIP5K1C has a role during embryogenesis. Independently of its catalytic activity, is required for membrane ruffling formation, actin organization and focal adhesion formation during directional cell migration by controlling integrin-induced translocation of the small GTPase RAC1 to the plasma membrane. Also functions in the nucleus where it acts as an activator of TUT1 adenylyltransferase activity in nuclear speckles, thereby regulating mRNA polyadenylation of a select set of mRNAs. The polypeptide is Phosphatidylinositol 4-phosphate 5-kinase type-1 alpha (Mus musculus (Mouse)).